The sequence spans 73 residues: U-scoloptoxin(03)-Ssd1b (73 aa).

The signal sequence occupies residues 1-23 (MKSSMAVLLVMGLIIFTLDKCYS).

In terms of processing, contains 3 disulfide bonds. As to expression, expressed by the venom gland.

Its subcellular location is the secreted. The protein is U-scoloptoxin(03)-Ssd1b of Scolopendra dehaani (Thai centipede).